The sequence spans 207 residues: Putative 3-methyladenine DNA glycosylase (207 aa).

Belongs to the DNA glycosylase MPG family.

This is Putative 3-methyladenine DNA glycosylase from Listeria monocytogenes serotype 4b (strain CLIP80459).